Here is a 300-residue protein sequence, read N- to C-terminus: ETS homologous factor (300 aa).

A PNT domain is found at 29 to 115 (STCNVSSGFF…SNLQHLKWNG (87 aa)). A disordered region spans residues 183-202 (ESPDMKKEQDPPAKCHTKKH). The span at 185 to 195 (PDMKKEQDPPA) shows a compositional bias: basic and acidic residues. The ETS DNA-binding region spans 207–289 (THLWEFIRDI…DGRRLVYKFG (83 aa)).

Belongs to the ETS family. In terms of tissue distribution, expressed exclusively in tissues with a high content of epithelial cells. Highly expressed in salivary gland, mammary gland, prostate, and lung. Weakly expressed in kidney and colon. Not detected in heart, brain, placenta, liver, skeletal muscle, spleen, thymus, testis, ovary, small intestine or peripheral blood leukocytes.

The protein localises to the nucleus. Transcriptional activator that may play a role in regulating epithelial cell differentiation and proliferation. May act as a repressor for a specific subset of ETS/AP-1-responsive genes and as a modulator of the nuclear response to mitogen-activated protein kinase signaling cascades. Binds to DNA sequences containing the consensus nucleotide core sequence GGAA. Involved in regulation of TNFRSF10B/DR5 expression through Ets-binding sequences on the TNFRSF10B/DR5 promoter. May contribute to development and carcinogenesis by acting as a tumor suppressor gene or anti-oncogene. This is ETS homologous factor from Homo sapiens (Human).